The following is a 164-amino-acid chain: Transcription elongation factor GreA (164 aa).

Belongs to the GreA/GreB family.

Its function is as follows. Necessary for efficient RNA polymerase transcription elongation past template-encoded arresting sites. The arresting sites in DNA have the property of trapping a certain fraction of elongating RNA polymerases that pass through, resulting in locked ternary complexes. Cleavage of the nascent transcript by cleavage factors such as GreA or GreB allows the resumption of elongation from the new 3'terminus. GreA releases sequences of 2 to 3 nucleotides. This is Transcription elongation factor GreA from Helicobacter pylori (strain P12).